An 84-amino-acid chain; its full sequence is Delta-thalatoxin-Cad1a (84 aa).

Positions 1-19 (MAYLKIVLVALMLVLAVSA) are cleaved as a signal peptide. Residues 20-33 (MRRPDQQDQDISVA) constitute a propeptide that is removed on maturation. 3 disulfide bridges follow: C38–C78, C40–C68, and C61–C79.

Belongs to the sea anemone sodium channel inhibitory toxin family. Type II subfamily.

It is found in the secreted. The protein resides in the nematocyst. Functionally, binds specifically to the voltage-gated sodium channel (Nav) and delays its inactivation. This is Delta-thalatoxin-Cad1a from Cryptodendrum adhaesivum (Adhesive sea anemone).